The following is a 445-amino-acid chain: GTPase Der (445 aa).

EngA-type G domains are found at residues 3–167 (PVIA…YAGQ) and 180–353 (VKIA…AAAM). Residues 9–16 (GRPNVGKS), 56–60 (DTGGF), 119–122 (NKAE), 186–193 (GRPNVGKS), 233–237 (DTAGL), and 298–301 (NKWD) contribute to the GTP site. Positions 354 to 438 (AKLPTPKLTR…PLRIEFRSST (85 aa)) constitute a KH-like domain.

It belongs to the TRAFAC class TrmE-Era-EngA-EngB-Septin-like GTPase superfamily. EngA (Der) GTPase family. Associates with the 50S ribosomal subunit.

In terms of biological role, GTPase that plays an essential role in the late steps of ribosome biogenesis. This is GTPase Der from Paraburkholderia xenovorans (strain LB400).